Consider the following 571-residue polypeptide: Potassium-transporting ATPase potassium-binding subunit (571 aa).

The next 12 helical transmembrane spans lie at 5–25 (GWMQ…PLGG), 64–84 (LAYA…LYAL), 136–156 (GLTH…VALI), 179–199 (LYVL…QGMP), 220–240 (VGPV…GGFF), 254–274 (LSNF…TNVF), 285–305 (WAIL…TYWA), 330–350 (FGIA…CGAV), 375–395 (IIGG…VAIF), 421–441 (MLGI…ATVV), 488–508 (LAIG…AIAG), and 527–547 (GGLF…LTFF).

It belongs to the KdpA family. As to quaternary structure, the system is composed of three essential subunits: KdpA, KdpB and KdpC.

The protein localises to the cell inner membrane. Its function is as follows. Part of the high-affinity ATP-driven potassium transport (or Kdp) system, which catalyzes the hydrolysis of ATP coupled with the electrogenic transport of potassium into the cytoplasm. This subunit binds the periplasmic potassium ions and delivers the ions to the membrane domain of KdpB through an intramembrane tunnel. The chain is Potassium-transporting ATPase potassium-binding subunit from Methylorubrum extorquens (strain CM4 / NCIMB 13688) (Methylobacterium extorquens).